A 318-amino-acid chain; its full sequence is Myeloid-associated differentiation marker (318 aa).

MARVEL domains follow at residues 25–157 (ALTQ…ARPG) and 162–315 (YMAT…RLVF). The next 8 membrane-spanning stretches (helical) occupy residues 35-55 (LLQL…GAWT), 58-78 (MGNW…IILI), 95-115 (FPIT…IIYP), 131-151 (AIAA…EVAW), 165-185 (TVPG…FAFI), 197-217 (LEWC…TVLL), 233-253 (FLSG…VLWP), and 290-310 (LAVS…LVYS).

This sequence belongs to the MAL family.

Its subcellular location is the membrane. The sequence is that of Myeloid-associated differentiation marker (Myadm) from Rattus norvegicus (Rat).